A 377-amino-acid chain; its full sequence is Modification methylase CviBIII (377 aa).

It belongs to the N(4)/N(6)-methyltransferase family.

It carries out the reaction a 2'-deoxyadenosine in DNA + S-adenosyl-L-methionine = an N(6)-methyl-2'-deoxyadenosine in DNA + S-adenosyl-L-homocysteine + H(+). Functionally, a gamma subtype methylase that recognizes the double-stranded sequence 5'-TCGA-3' and methylates A-4 on both strands. The sequence is that of Modification methylase CviBIII (CVIBIIIM) from Paramecium bursaria Chlorella virus NC1A (PBCV-NC1A).